Reading from the N-terminus, the 623-residue chain is Prothrombin (623 aa).

Positions 1-24 (MAHVRGLQLPGCLALAALCTLVHS) are cleaved as a signal peptide. A propeptide spanning residues 25-43 (QHVFLAPQQALSLLQRVRR) is cleaved from the precursor. Residues 44-90 (ANSVFLEEVRKGNLERECVEETCSYEEAFEALESSTATDVFWAKYTA) form the Gla domain. Residues Glu-50, Glu-51, Glu-58, Glu-60, Glu-63, Glu-64, Glu-69, Glu-70, Glu-73, and Glu-76 each carry the 4-carboxyglutamate modification. Cysteines 61 and 66 form a disulfide. 11 cysteine pairs are disulfide-bonded: Cys-91–Cys-104, Cys-109–Cys-187, Cys-130–Cys-170, Cys-158–Cys-182, Cys-214–Cys-292, Cys-235–Cys-275, Cys-263–Cys-287, Cys-337–Cys-483, Cys-392–Cys-408, Cys-537–Cys-551, and Cys-565–Cys-595. 2 Kringle domains span residues 108-187 (NCAE…IPVC) and 213-292 (QCVP…LNYC). N-linked (GlcNAc...) asparagine glycans are attached at residues Asn-122 and Asn-144. The region spanning 365–619 (IVEGSDAEIG…LKKWIQKVID (255 aa)) is the Peptidase S1 domain. His-407 acts as the Charge relay system in catalysis. Asn-417 carries N-linked (GlcNAc...) asparagine glycosylation. The Charge relay system role is filled by Asp-463. Residues 552-574 (AGYKPDEGKRGDACEGDSGGPFV) form a high affinity receptor-binding region which also known as the TP508 peptide region. Catalysis depends on Ser-569, which acts as the Charge relay system.

This sequence belongs to the peptidase S1 family. Heterodimer (named alpha-thrombin) of a light and a heavy chain; disulfide-linked. Forms a heterodimer with SERPINA5. In plasma, interacts (via N-terminus) with alpha-1-microglobulin; this interaction does not prevent the activation of prothrombin to thrombin. The gamma-carboxyglutamyl residues, which bind calcium ions, result from the carboxylation of glutamyl residues by a microsomal enzyme, the vitamin K-dependent carboxylase. The modified residues are necessary for the calcium-dependent interaction with a negatively charged phospholipid surface, which is essential for the conversion of prothrombin to thrombin. In terms of processing, in the penultimate step of the coagulation cascade, prothrombin is converted to thrombin by the prothrombinase complex composed of factor Xa (F10), cofactor Va (F5), and phospholipids. This activation requires factor Xa-catalyzed sequential cleavage at 2 sites, Arg-315 and Arg-364, along 2 possible pathways. In the first pathway, the first cleavage occurs at Arg-315, leading to the formation of the inactive intermediate prethrombin-2. This pathway preferentially occurs on platelets and in the absence of cofactor Va. In the second pathway, the first cleavage occurs at Arg-364, which separates protease domain into 2 chains that remain connected through a disulfide bond and generates the active intermediate meizothrombin. The presence of cofactor Va directs activation along the meizothrombin pathway and greatly accelerates the rate of cleavage at Arg-364, but has a smaller effect on the cleavage of meizothrombin at Arg-315. Meizothrombin accumulates as an intermediate when prothrombinase is assembled on the membrane of red blood cells.

It carries out the reaction Selective cleavage of Arg-|-Gly bonds in fibrinogen to form fibrin and release fibrinopeptides A and B.. Its activity is regulated as follows. Activity is promoted in the presence of negatively charged surfaces, such as polyphosphate and dextran sulfate. Inhibited by SERPINA5. Its function is as follows. Thrombin, which cleaves bonds after Arg and Lys, converts fibrinogen to fibrin and activates factors V, VII, VIII, XIII, and, in complex with thrombomodulin, protein C. Functions in blood homeostasis, inflammation and wound healing. Activates coagulation factor XI (F11); activation is promoted by the contact with negatively charged surfaces. Triggers the production of pro-inflammatory cytokines, such as MCP-1/CCL2 and IL8/CXCL8, in endothelial cells. In Pongo abelii (Sumatran orangutan), this protein is Prothrombin (F2).